The sequence spans 617 residues: Formin-binding protein 1 (617 aa).

The segment at 1–79 is required for self-association and induction of membrane tubulation; that stretch reads MSWGTELWDQ…CKAFISNLNE (79 aa). Positions 1-264 constitute an F-BAR domain; sequence MSWGTELWDQ…AAESIDQKND (264 aa). The interaction with microtubules stretch occupies residues 1–335; that stretch reads MSWGTELWDQ…KKNKLMSLLT (335 aa). Lys66 and Lys110 each carry N6-acetyllysine. Positions 67–259 form a coiled coil; it reads YTSCKAFISN…DGIVKAAESI (193 aa). Positions 251–617 are required for self-association and induction of membrane tubulation; it reads GIVKAAESID…VCLDKNAKDS (367 aa). 2 disordered regions span residues 280 to 315 and 333 to 366; these read GDIE…KFGG and LLTS…QKEP. Phosphoserine is present on residues Ser296 and Ser299. Pro residues predominate over residues 338 to 347; it reads HQPPPPPPAS. A phosphoserine mark is found at Ser349 and Ser359. Residues 398–490 adopt a coiled-coil conformation; that stretch reads TPEDFSNLPP…EVEGRLPARS (93 aa). Residues 400-552 are interaction with RND2; it reads EDFSNLPPEQ…FDDEEPLPAI (153 aa). One can recognise an REM-1 domain in the interval 404-481; sequence NLPPEQRRKK…TQKFEAWLAE (78 aa). The segment at 486-531 is disordered; the sequence is LPARSEQARRQSGLYDSQNPPTVNNCAQDRESPDGSYTEEQSQESE. An interaction with PDE6G region spans residues 495-617; it reads RQSGLYDSQN…VCLDKNAKDS (123 aa). At Ser497 the chain carries Phosphoserine. Polar residues predominate over residues 499–512; it reads LYDSQNPPTVNNCA. At Tyr500 the chain carries Phosphotyrosine. Residues 514–617 form a required for interaction with TNKS region; that stretch reads DRESPDGSYT…VCLDKNAKDS (104 aa). Ser521 carries the post-translational modification Phosphoserine. Residues 535-617 form an interaction with DNM1 and DNM3 region; sequence LATDFDDEFD…VCLDKNAKDS (83 aa). Positions 550–611 constitute an SH3 domain; it reads PAIGTCKALY…PTSYVEVCLD (62 aa). The interaction with ARHGAP17, DAAM1, DIAPH1 and DIAPH2 stretch occupies residues 550–617; sequence PAIGTCKALY…VCLDKNAKDS (68 aa). Residues 553 to 609 are interaction with DNM2 and WASL; the sequence is GTCKALYTFEGQNEGTISVVEGETLYVIEEDKGDGWTRIRRNEDEEGYVPTSYVEVC. The segment at 553–610 is interaction with FASLG; that stretch reads GTCKALYTFEGQNEGTISVVEGETLYVIEEDKGDGWTRIRRNEDEEGYVPTSYVEVCL.

This sequence belongs to the FNBP1 family. As to quaternary structure, interacts specifically with GTP-bound RND2 and CDC42. Interacts with PDE6G and microtubules. Homodimerizes, the dimers can polymerize end-to-end to form filamentous structures. Interacts with AKAP9, ARHGAP17, DAAM1, DIAPH1, DIAPH2, DNM1, DNM2, DNM3, FASLG/FASL, SNX2 and WASL/N-WASP. May interact with TNKS. In terms of tissue distribution, very highly expressed in the epithelial cells of the gastrointestinal tract, respiratory, reproductive and urinary systems. Also highly expressed in brown adipose tissue, cardiomyocytes, enteric ganglia and glucagon producing cells of the pancreas. Expressed in germ cells of the testis and all regions of the brain.

The protein localises to the cytoplasm. The protein resides in the cytoskeleton. It is found in the cell cortex. It localises to the lysosome. Its subcellular location is the cytoplasmic vesicle. The protein localises to the cell membrane. The protein resides in the membrane. It is found in the clathrin-coated pit. Functionally, may act as a link between RND2 signaling and regulation of the actin cytoskeleton. Required to coordinate membrane tubulation with reorganization of the actin cytoskeleton during the late stage of clathrin-mediated endocytosis. Binds to lipids such as phosphatidylinositol 4,5-bisphosphate and phosphatidylserine and promotes membrane invagination and the formation of tubules. Also enhances actin polymerization via the recruitment of WASL/N-WASP, which in turn activates the Arp2/3 complex. Actin polymerization may promote the fission of membrane tubules to form endocytic vesicles. May be required for the lysosomal retention of FASLG/FASL. The protein is Formin-binding protein 1 (FNBP1) of Homo sapiens (Human).